Reading from the N-terminus, the 60-residue chain is Large ribosomal subunit protein bL32 (60 aa).

It belongs to the bacterial ribosomal protein bL32 family.

The protein is Large ribosomal subunit protein bL32 of Pseudothermotoga lettingae (strain ATCC BAA-301 / DSM 14385 / NBRC 107922 / TMO) (Thermotoga lettingae).